Consider the following 712-residue polypeptide: Protein phosphatase 1 regulatory subunit 37 (712 aa).

Positions 1 to 12 are enriched in pro residues; sequence MEIPPQEAPPGP. The disordered stretch occupies residues 1 to 47; that stretch reads MEIPPQEAPPGPGADADADAEAETEEASAEAESPTGTSPPADGRLKA. The span at 16–29 shows a compositional bias: acidic residues; it reads ADADAEAETEEASA. Ser-56 and Ser-62 each carry phosphoserine. LRR repeat units lie at residues 226-246, 254-275, 283-303, 312-332, and 340-360; these read SLAV…MLLA, NLRE…AQLG, SLQI…AYIC, GLVT…AFLG, and SLET…RNLK. The interval 492–680 is disordered; it reads ESGELPAVGS…PPGLEAKGGS (189 aa). A compositionally biased stretch (acidic residues) spans 514 to 531; it reads SDSDSDSDREEQEEEEED. Position 583 is a phosphoserine (Ser-583). The segment covering 605 to 626 has biased composition (pro residues); the sequence is PPVPPTFVSSPPPSPPSPPASP. Over residues 639–651 the composition is skewed to polar residues; that stretch reads SEAQPQLEPSQAG.

Belongs to the PPP1R37 family. Interacts with PPP1CA.

In terms of biological role, inhibits phosphatase activity of protein phosphatase 1 (PP1) complexes. In Mus musculus (Mouse), this protein is Protein phosphatase 1 regulatory subunit 37 (Ppp1r37).